Reading from the N-terminus, the 361-residue chain is UDP-N-acetylglucosamine--N-acetylmuramyl-(pentapeptide) pyrophosphoryl-undecaprenol N-acetylglucosamine transferase (361 aa).

Residues 12–14 (TGG), Asn123, Arg166, Ser192, and Gln293 contribute to the UDP-N-acetyl-alpha-D-glucosamine site.

This sequence belongs to the glycosyltransferase 28 family. MurG subfamily.

It localises to the cell inner membrane. The enzyme catalyses di-trans,octa-cis-undecaprenyl diphospho-N-acetyl-alpha-D-muramoyl-L-alanyl-D-glutamyl-meso-2,6-diaminopimeloyl-D-alanyl-D-alanine + UDP-N-acetyl-alpha-D-glucosamine = di-trans,octa-cis-undecaprenyl diphospho-[N-acetyl-alpha-D-glucosaminyl-(1-&gt;4)]-N-acetyl-alpha-D-muramoyl-L-alanyl-D-glutamyl-meso-2,6-diaminopimeloyl-D-alanyl-D-alanine + UDP + H(+). It participates in cell wall biogenesis; peptidoglycan biosynthesis. Functionally, cell wall formation. Catalyzes the transfer of a GlcNAc subunit on undecaprenyl-pyrophosphoryl-MurNAc-pentapeptide (lipid intermediate I) to form undecaprenyl-pyrophosphoryl-MurNAc-(pentapeptide)GlcNAc (lipid intermediate II). In Caulobacter vibrioides (strain ATCC 19089 / CIP 103742 / CB 15) (Caulobacter crescentus), this protein is UDP-N-acetylglucosamine--N-acetylmuramyl-(pentapeptide) pyrophosphoryl-undecaprenol N-acetylglucosamine transferase.